Consider the following 462-residue polypeptide: Sensor histidine kinase ZraS (462 aa).

Topologically, residues 1–14 (MNVMRLSKDSVAVG) are cytoplasmic. A helical transmembrane segment spans residues 15-35 (LSWLLTGLILLLVCLFSALIV). Over 36–197 (RDYGRENEAA…ADHARGLRNM (162 aa)) the chain is Periplasmic. A helical transmembrane segment spans residues 198-218 (VIMLCAAGVVMAATVLAQFWF). Topologically, residues 219 to 462 (RRYQRSRKQL…VNGQQKDEQG (244 aa)) are cytoplasmic. The region spanning 247–455 (GVAHEIRNPL…LFTFYLPVNG (209 aa)) is the Histidine kinase domain. H250 is modified (phosphohistidine; by autocatalysis).

In terms of processing, autophosphorylated.

It is found in the cell inner membrane. It carries out the reaction ATP + protein L-histidine = ADP + protein N-phospho-L-histidine.. Its activity is regulated as follows. Activity of the ZraS/ZraR two-component system is repressed by the zinc-bound form of ZraP, which probably interacts with the periplasmic region of ZraS. Its function is as follows. Part of the Zra signaling pathway, an envelope stress response (ESR) system composed of the periplasmic accessory protein ZraP, the histidine kinase ZraS and the transcriptional regulator ZraR. The ZraPSR system contributes to antibiotic resistance and is important for membrane integrity in the presence of membrane-targeting biocides. ZraS is a member of the two-component regulatory system ZraS/ZraR. Functions as a membrane-associated sensor kinase that phosphorylates ZraR in response to high concentrations of Zn(2+) or Pb(2+) in the medium. The chain is Sensor histidine kinase ZraS (zraS) from Klebsiella oxytoca.